We begin with the raw amino-acid sequence, 172 residues long: Myosin regulatory light chain 2, smooth muscle minor isoform (172 aa).

At S2 the chain carries N-acetylserine. T19 carries the post-translational modification Phosphothreonine; by MLCK. S20 bears the Phosphoserine; by MLCK mark. 3 EF-hand domains span residues 29 to 64 (SQIQEFKEAFNMIDQNRDGFIDKEDLHDMLASLGKN), 98 to 133 (DPEDVIRNAFACFDEEATGFIQEDYLRELLTTMGDR), and 134 to 169 (FTDEEVDELYREAPIDKKGNFNYIEFTRILKHGAKD). Ca(2+) contacts are provided by D42, N44, D46, and D53.

In terms of assembly, myosin is a hexamer of 2 heavy chains and 4 light chains. Post-translationally, phosphorylation increases the actin-activated myosin ATPase activity and thereby regulates the contractile activity.

Myosin regulatory subunit that plays an important role in regulation of both smooth muscle and nonmuscle cell contractile activity. Implicated in cytokinesis, receptor capping, and cell locomotion. The polypeptide is Myosin regulatory light chain 2, smooth muscle minor isoform (Gallus gallus (Chicken)).